The sequence spans 301 residues: Transcriptional activator protein NhaR (301 aa).

The HTH lysR-type domain maps to 6–63 (INYNHLYYFWHVYKEGSVVGAAEALYLTPQTITGQIRALEERLQGKLFKRKGRGLEPS). The H-T-H motif DNA-binding region spans 23–42 (VVGAAEALYLTPQTITGQIR).

It belongs to the LysR transcriptional regulatory family.

Its subcellular location is the cytoplasm. Plays a role in the positive regulation of NhaA. The protein is Transcriptional activator protein NhaR (nhaR) of Escherichia coli (strain K12).